The primary structure comprises 652 residues: DNA ligase (652 aa).

NAD(+) contacts are provided by residues 29–33, 78–79, and glutamate 107; these read DAEYD and SL. Lysine 109 acts as the N6-AMP-lysine intermediate in catalysis. The NAD(+) site is built by arginine 130, glutamate 164, lysine 278, and lysine 302. Zn(2+)-binding residues include cysteine 395, cysteine 398, cysteine 413, and cysteine 418. The 76-residue stretch at 577-652 folds into the BRCT domain; sequence ASDAALTGMT…IKDEAWLESL (76 aa).

This sequence belongs to the NAD-dependent DNA ligase family. LigA subfamily. Requires Mg(2+) as cofactor. Mn(2+) is required as a cofactor.

The enzyme catalyses NAD(+) + (deoxyribonucleotide)n-3'-hydroxyl + 5'-phospho-(deoxyribonucleotide)m = (deoxyribonucleotide)n+m + AMP + beta-nicotinamide D-nucleotide.. In terms of biological role, DNA ligase that catalyzes the formation of phosphodiester linkages between 5'-phosphoryl and 3'-hydroxyl groups in double-stranded DNA using NAD as a coenzyme and as the energy source for the reaction. It is essential for DNA replication and repair of damaged DNA. The protein is DNA ligase of Streptococcus mutans serotype c (strain ATCC 700610 / UA159).